The primary structure comprises 381 residues: Lipid-A-disaccharide synthase (381 aa).

It belongs to the LpxB family.

The catalysed reaction is a lipid X + a UDP-2-N,3-O-bis[(3R)-3-hydroxyacyl]-alpha-D-glucosamine = a lipid A disaccharide + UDP + H(+). It functions in the pathway bacterial outer membrane biogenesis; LPS lipid A biosynthesis. In terms of biological role, condensation of UDP-2,3-diacylglucosamine and 2,3-diacylglucosamine-1-phosphate to form lipid A disaccharide, a precursor of lipid A, a phosphorylated glycolipid that anchors the lipopolysaccharide to the outer membrane of the cell. In Solibacter usitatus (strain Ellin6076), this protein is Lipid-A-disaccharide synthase.